The chain runs to 462 residues: ATP synthase subunit beta (462 aa).

Position 152-159 (152-159 (GGAGVGKT)) interacts with ATP.

Belongs to the ATPase alpha/beta chains family. F-type ATPases have 2 components, CF(1) - the catalytic core - and CF(0) - the membrane proton channel. CF(1) has five subunits: alpha(3), beta(3), gamma(1), delta(1), epsilon(1). CF(0) has three main subunits: a(1), b(2) and c(9-12). The alpha and beta chains form an alternating ring which encloses part of the gamma chain. CF(1) is attached to CF(0) by a central stalk formed by the gamma and epsilon chains, while a peripheral stalk is formed by the delta and b chains.

Its subcellular location is the cell inner membrane. It carries out the reaction ATP + H2O + 4 H(+)(in) = ADP + phosphate + 5 H(+)(out). Produces ATP from ADP in the presence of a proton gradient across the membrane. The catalytic sites are hosted primarily by the beta subunits. The chain is ATP synthase subunit beta from Tolumonas auensis (strain DSM 9187 / NBRC 110442 / TA 4).